A 311-amino-acid polypeptide reads, in one-letter code: Syntaxin-111 (311 aa).

Over 1–284 the chain is Cytoplasmic; the sequence is MNDLMTKSFM…AREHQRSSRK (284 aa). Residues 213 to 275 form the t-SNARE coiled-coil homology domain; it reads VHEIQDRHDA…QGGNKELRKA (63 aa). Residues 285–305 traverse the membrane as a helical; Anchor for type IV membrane protein segment; that stretch reads WLCIGIIILLLLVLLVIVPIA. Residues 306–311 are Vesicular-facing; sequence TSFKRS.

Belongs to the syntaxin family. As to expression, expressed in roots and panicles.

Its subcellular location is the cell membrane. The protein resides in the cytoplasm. Functionally, vesicle trafficking protein that functions in the secretory pathway. The chain is Syntaxin-111 from Oryza sativa subsp. japonica (Rice).